Reading from the N-terminus, the 547-residue chain is Chaperonin GroEL (547 aa).

ATP-binding positions include 30-33 (TLGP), lysine 51, 87-91 (DGTTT), glycine 415, 479-481 (NAA), and aspartate 495. The segment at 524–547 (APKKDEPTPPAAGGGMGGMGGMDF) is disordered. Gly residues predominate over residues 535-547 (AGGGMGGMGGMDF).

Belongs to the chaperonin (HSP60) family. As to quaternary structure, forms a cylinder of 14 subunits composed of two heptameric rings stacked back-to-back. Interacts with the co-chaperonin GroES.

Its subcellular location is the cytoplasm. It catalyses the reaction ATP + H2O + a folded polypeptide = ADP + phosphate + an unfolded polypeptide.. In terms of biological role, together with its co-chaperonin GroES, plays an essential role in assisting protein folding. The GroEL-GroES system forms a nano-cage that allows encapsulation of the non-native substrate proteins and provides a physical environment optimized to promote and accelerate protein folding. This Xylella fastidiosa (strain 9a5c) protein is Chaperonin GroEL.